A 419-amino-acid chain; its full sequence is S-adenosylmethionine synthase (419 aa).

His15 contributes to the ATP binding site. Residue Asp17 participates in Mg(2+) binding. Glu43 provides a ligand contact to K(+). Positions 56 and 100 each coordinate L-methionine. The tract at residues 100–110 is flexible loop; it reads QSPDIAQGVNE. Residues 171-173, 248-249, Asp257, 263-264, Ala280, and Lys284 each bind ATP; these read DGK, KF, and RK. Residue Asp257 coordinates L-methionine. Residue Lys288 participates in L-methionine binding.

It belongs to the AdoMet synthase family. Homotetramer; dimer of dimers. The cofactor is Mg(2+). It depends on K(+) as a cofactor.

The protein resides in the cytoplasm. It catalyses the reaction L-methionine + ATP + H2O = S-adenosyl-L-methionine + phosphate + diphosphate. The protein operates within amino-acid biosynthesis; S-adenosyl-L-methionine biosynthesis; S-adenosyl-L-methionine from L-methionine: step 1/1. Functionally, catalyzes the formation of S-adenosylmethionine (AdoMet) from methionine and ATP. The overall synthetic reaction is composed of two sequential steps, AdoMet formation and the subsequent tripolyphosphate hydrolysis which occurs prior to release of AdoMet from the enzyme. This Prochlorococcus marinus (strain MIT 9303) protein is S-adenosylmethionine synthase.